Consider the following 87-residue polypeptide: Insertion element IS407 uncharacterized 10.0 kDa protein (87 aa).

Belongs to the transposase 8 family.

The chain is Insertion element IS407 uncharacterized 10.0 kDa protein from Burkholderia multivorans (strain ATCC 17616 / 249).